The sequence spans 82 residues: P2Y purinoceptor 2 (82 aa).

A helical transmembrane segment spans residues 1 to 25 (LPLSYGVVCVLGLCLNVVALYIFLC). Topologically, residues 26–35 (RLKTWNASTT) are cytoplasmic. The chain crosses the membrane as a helical span at residues 36-56 (YMFHLAVSDSLYAASLPLLVY). The Extracellular segment spans residues 57-75 (YYAQGDHWPFSTVLCKLVR). A helical transmembrane segment spans residues 76-82 (FLFYTNL).

The protein belongs to the G-protein coupled receptor 1 family. As to expression, expressed in brain, heart, stria vascularis and vestibular labyrinth.

It localises to the cell membrane. Functionally, receptor for ATP and UTP coupled to G-proteins that activate a phosphatidylinositol-calcium second messenger system. Not activated by UDP. The polypeptide is P2Y purinoceptor 2 (P2RY2) (Meriones unguiculatus (Mongolian jird)).